A 232-amino-acid polypeptide reads, in one-letter code: RNA chaperone ProQ (232 aa).

Residues 105 to 182 (EAKARVQAQR…REEQHTPVSD (78 aa)) are disordered. A compositionally biased stretch (basic and acidic residues) spans 117 to 136 (QQAKKREAAAAAGEKEDAPR). Residues 137–146 (RERKPRPTTP) show a composition bias toward basic residues. Residues 147–177 (RRKEGAERKPRAQKPVEKAPKTVKAPREEQH) are compositionally biased toward basic and acidic residues.

The protein belongs to the ProQ family.

Its subcellular location is the cytoplasm. Functionally, RNA chaperone with significant RNA binding, RNA strand exchange and RNA duplexing activities. May regulate ProP activity through an RNA-based, post-transcriptional mechanism. This Escherichia coli (strain ATCC 8739 / DSM 1576 / NBRC 3972 / NCIMB 8545 / WDCM 00012 / Crooks) protein is RNA chaperone ProQ.